A 441-amino-acid polypeptide reads, in one-letter code: Xylose isomerase 1 (441 aa).

Residues His105 and Asp108 contribute to the active site. Residues Glu236, Glu272, His275, Asp300, Asp311, Asp313, and Asp343 each coordinate Mg(2+).

This sequence belongs to the xylose isomerase family. Homotetramer. Requires Mg(2+) as cofactor.

Its subcellular location is the cytoplasm. It carries out the reaction alpha-D-xylose = alpha-D-xylulofuranose. This is Xylose isomerase 1 (xylA1) from Xanthomonas axonopodis pv. citri (strain 306).